Reading from the N-terminus, the 137-residue chain is Nucleoside diphosphate kinase (137 aa).

Positions 11, 59, 87, 93, 104, and 114 each coordinate ATP. His117 acts as the Pros-phosphohistidine intermediate in catalysis.

The protein belongs to the NDK family. Homotetramer. Mg(2+) is required as a cofactor.

The protein localises to the cytoplasm. The enzyme catalyses a 2'-deoxyribonucleoside 5'-diphosphate + ATP = a 2'-deoxyribonucleoside 5'-triphosphate + ADP. It carries out the reaction a ribonucleoside 5'-diphosphate + ATP = a ribonucleoside 5'-triphosphate + ADP. In terms of biological role, major role in the synthesis of nucleoside triphosphates other than ATP. The ATP gamma phosphate is transferred to the NDP beta phosphate via a ping-pong mechanism, using a phosphorylated active-site intermediate. The sequence is that of Nucleoside diphosphate kinase from Frankia alni (strain DSM 45986 / CECT 9034 / ACN14a).